The primary structure comprises 445 residues: Baccatin III:3-amino-3-phenylpropanoyltransferase (445 aa).

Belongs to the plant acyltransferase family.

The catalysed reaction is (3R)-3-amino-3-phenylpropanoyl-CoA + baccatin III = 3'-N-debenzoyl-2'-deoxytaxol + CoA. The protein operates within alkaloid biosynthesis; taxol biosynthesis. Acyltransferase involved in taxol biosynthesis. Catalyzes the selective 13-O-acylation of baccatin III with (3R)-3-amino-3-phenylpropanoyl-CoA as the acyl donor to form 3'-N-debenzoyl-2'-deoxytaxol. In Taxus cuspidata (Japanese yew), this protein is Baccatin III:3-amino-3-phenylpropanoyltransferase.